The chain runs to 250 residues: Probable aquaporin TIP-type (250 aa).

Transmembrane regions (helical) follow at residues 20-42 and 55-77; these read AYVA…AIAY and GLVA…AANV. The short motif at 83–85 is the NPA 1 element; it reads NPA. The next 3 helical transmembrane spans lie at 97-119, 140-162, and 172-194; these read TILT…CLLL, IQGV…ATAA, and IAPI…FSGG. The NPA 2 motif lies at 197 to 199; that stretch reads NPA. Residues 215-237 form a helical membrane-spanning segment; the sequence is WIYWAGPLIGGALAGFIYGDVFI.

This sequence belongs to the MIP/aquaporin (TC 1.A.8) family. TIP (TC 1.A.8.10) subfamily. In terms of tissue distribution, expressed in mature seeds and dark-grown seedlings.

It localises to the vacuole membrane. Functionally, channel protein in tonoplast. These proteins may allow the diffusion of amino acids and/or peptides from the vacuolar compartment to the cytoplasm. This is Probable aquaporin TIP-type (DIP) from Antirrhinum majus (Garden snapdragon).